The primary structure comprises 123 residues: Large ribosomal subunit protein bL12 (123 aa).

The protein belongs to the bacterial ribosomal protein bL12 family. As to quaternary structure, homodimer. Part of the ribosomal stalk of the 50S ribosomal subunit. Forms a multimeric L10(L12)X complex, where L10 forms an elongated spine to which 2 to 4 L12 dimers bind in a sequential fashion. Binds GTP-bound translation factors.

In terms of biological role, forms part of the ribosomal stalk which helps the ribosome interact with GTP-bound translation factors. Is thus essential for accurate translation. This chain is Large ribosomal subunit protein bL12, found in Rickettsia bellii (strain OSU 85-389).